A 314-amino-acid polypeptide reads, in one-letter code: Probable 2-(5''-triphosphoribosyl)-3'-dephosphocoenzyme-A synthase (314 aa).

The protein belongs to the CitG/MdcB family.

It carries out the reaction 3'-dephospho-CoA + ATP = 2'-(5''-triphospho-alpha-D-ribosyl)-3'-dephospho-CoA + adenine. The sequence is that of Probable 2-(5''-triphosphoribosyl)-3'-dephosphocoenzyme-A synthase from Photobacterium profundum (strain SS9).